The sequence spans 181 residues: MTTETISLIRSSIKSIQDYPKPGILFRDVTSLLEDAKAYQATINLLVDRYKDMGFTKVVGTEARGFLFGAPLALELGVGFVPVRKPGKLPRPTIAQSYELEYGVDTLEIHTDAIVEGDKVLVVDDLLATGGTIEATTKLIRQLGGEVEHAAFVINLPEIGGDKRLEGLGLNVYSICEFEGH.

It belongs to the purine/pyrimidine phosphoribosyltransferase family. In terms of assembly, homodimer.

It is found in the cytoplasm. The catalysed reaction is AMP + diphosphate = 5-phospho-alpha-D-ribose 1-diphosphate + adenine. It participates in purine metabolism; AMP biosynthesis via salvage pathway; AMP from adenine: step 1/1. Catalyzes a salvage reaction resulting in the formation of AMP, that is energically less costly than de novo synthesis. The protein is Adenine phosphoribosyltransferase of Vibrio campbellii (strain ATCC BAA-1116).